The primary structure comprises 136 residues: NADH-quinone oxidoreductase subunit A (136 aa).

Helical transmembrane passes span 20–40 (LAVYAVLVAAFVAVQLFVAWW), 70–90 (VPFYLVAIFFLIFDMEGAYIL), and 99–119 (LGWAGWLQMSFFIGLLLVGLV).

The protein belongs to the complex I subunit 3 family. As to quaternary structure, NDH-1 is composed of 14 different subunits. Subunits NuoA, H, J, K, L, M, N constitute the membrane sector of the complex.

It is found in the cell inner membrane. The catalysed reaction is a quinone + NADH + 5 H(+)(in) = a quinol + NAD(+) + 4 H(+)(out). Functionally, NDH-1 shuttles electrons from NADH, via FMN and iron-sulfur (Fe-S) centers, to quinones in the respiratory chain. The immediate electron acceptor for the enzyme in this species is believed to be ubiquinone. Couples the redox reaction to proton translocation (for every two electrons transferred, four hydrogen ions are translocated across the cytoplasmic membrane), and thus conserves the redox energy in a proton gradient. In Syntrophobacter fumaroxidans (strain DSM 10017 / MPOB), this protein is NADH-quinone oxidoreductase subunit A.